A 261-amino-acid polypeptide reads, in one-letter code: Small ribosomal subunit protein uS2 (261 aa).

This sequence belongs to the universal ribosomal protein uS2 family.

This Streptococcus mutans serotype c (strain ATCC 700610 / UA159) protein is Small ribosomal subunit protein uS2.